The primary structure comprises 432 residues: Crenactin (432 aa).

ATP-binding positions include 20 to 24 (TSYVK), 182 to 184 (GGH), 235 to 239 (EVVKR), 354 to 358 (GAFSW), and glutamine 399.

This sequence belongs to the actin family. As to quaternary structure, monomer. The crenactin monomers polymerize into right-handed helical filaments, with 8 subunits per complete turn of the helix. Forms single-stranded filaments under high salt concentrations and double-stranded filaments under low salt concentrations. Interacts with arcadin-1 and arcadin-2.

The protein resides in the cytoplasm. It is found in the cytoskeleton. The enzyme catalyses ATP + H2O = ADP + phosphate + H(+). Its activity is regulated as follows. Crenactin polymerization is inhibited by interaction with arcadin-2. Also significantly inhibited by elevated antibiotic A22 concentrations. Functionally, forms the backbone of an actin-like archaeal cytoskeleton, which is involved in cell shape determination. Has ATPase activity. Shows highest activity towards ATP or GTP as nucleotide, and only residual activity on UTP, CTP and dNTPs. This is Crenactin from Pyrobaculum calidifontis (strain DSM 21063 / JCM 11548 / VA1).